The primary structure comprises 220 residues: Cell surface glycolipoprotein MPB83 (220 aa).

The first 24 residues, 1-24 (MINVQAKPAAAASLAAIAIAFLAG), serve as a signal peptide directing secretion. Cys-25 carries N-palmitoyl cysteine lipidation. Cys-25 carries the S-diacylglycerol cysteine lipid modification. Residues Thr-48 and Thr-49 are each glycosylated (O-linked (Man...) threonine). Residues 83–215 (QDPVATAASN…ATVYMIDTVL (133 aa)) form the FAS1 domain.

As to quaternary structure, interacts with host (human) TLR2. Post-translationally, O-glycosylated. Contains 0-3 mannose residues attached to residues 48-49 in various configurations; the dominant glycoform is Thr-48(Man)/Thr-49(Man2) with an unusual Man(1-&gt;3)Man linkage, but Thr48(Man3)/Thr49(Man0) through to Thr48(Man0/)Thr49(Man3) are also seen. When isolated from culture filtrate runs as 25 and 23 kDa proteins; the larger protein is much less abundant, mostly associated with the cell and starts at residue 28, the shorter is more abundant and starts at residue 48.

The protein localises to the cell membrane. The protein resides in the secreted. It localises to the cell wall. Its function is as follows. Induces expression of human (host) matrix metalloproteinase-9 (MMP9) in a TLR1/TLR2-dependent fashion; the acylated 20 first mature residues (residues 25-40) induce the most expression, but whole recombinant protein (non-acylated and non-glycosylated), and mannosylated but not acylated protein (residues 26-220) also induce expression. In Mycobacterium bovis (strain ATCC BAA-935 / AF2122/97), this protein is Cell surface glycolipoprotein MPB83 (mpb83).